Consider the following 299-residue polypeptide: Small ribosomal subunit biogenesis GTPase RsgA (299 aa).

In terms of domain architecture, CP-type G spans 64–225; that stretch reads KNEMIRPPVA…VGDTPGFSSL (162 aa). Residues 113–116 and 168–176 each bind GTP; these read TKTD and GQTGAGKST. The Zn(2+) site is built by Cys249, Cys254, His256, and Cys262.

It belongs to the TRAFAC class YlqF/YawG GTPase family. RsgA subfamily. As to quaternary structure, monomer. Associates with 30S ribosomal subunit, binds 16S rRNA. Requires Zn(2+) as cofactor.

It localises to the cytoplasm. Its function is as follows. One of several proteins that assist in the late maturation steps of the functional core of the 30S ribosomal subunit. Helps release RbfA from mature subunits. May play a role in the assembly of ribosomal proteins into the subunit. Circularly permuted GTPase that catalyzes slow GTP hydrolysis, GTPase activity is stimulated by the 30S ribosomal subunit. In Latilactobacillus sakei subsp. sakei (strain 23K) (Lactobacillus sakei subsp. sakei), this protein is Small ribosomal subunit biogenesis GTPase RsgA.